The following is a 542-amino-acid chain: MTRYVFITGGVVSSLGKGLASAALAALLQARGYRVRLRKLDPYLNVDPGTMSPTQHGEVFVTDDGAETDLDLGHYERFTGLPASRADNVTTGRIYLDIITKERRGDYLGATIQVIPHVTNAIKAFVLDGNDDYDFVLVEIGGTVGDIEGLPFFEAIRQIGQERPRGSVCYLHLTLLPYIPSAGELKTKPTQHSVKELRSIGIQPDILLCRCDRPIPVDERRKLGLFCNVRESAVIEARDVDTIYAVPLSYREAGLDREILAHFQMKPEGEPKLERWQNILERVRNPEGEVTIAIVGKYTGLKDAYKSLTEALTHGGIANNVRVNLEWIEAEVFEREDPAPFLEGLHGILVPGGFGQRGAEGKIRAARYARERNIPYFGICFGMQMAVIEAARSLAGITDANSTEFGETREPVVGLLTEWMRGNELERRAAESDLGGTMRLGAYKATLAEGTKIAQMYGDTEISERHRHRYEVNMAYRECLEAKGLRFSGTSPDGLLPETVEHEGHPWFIGVQFHPELKSRPFEPHPLFKGFIAAAIEQSRLV.

The segment at 1-265 is amidoligase domain; that stretch reads MTRYVFITGG…DREILAHFQM (265 aa). Serine 13 is a binding site for CTP. Serine 13 serves as a coordination point for UTP. ATP contacts are provided by residues 14 to 19 and aspartate 71; that span reads SLGKGL. The Mg(2+) site is built by aspartate 71 and glutamate 139. CTP is bound by residues 146-148, 186-191, and lysine 222; these read DIE and KTKPTQ. UTP contacts are provided by residues 186–191 and lysine 222; that span reads KTKPTQ. 238–240 is an ATP binding site; the sequence is RDV. Residues 291 to 541 enclose the Glutamine amidotransferase type-1 domain; the sequence is TIAIVGKYTG…IAAAIEQSRL (251 aa). Glycine 353 provides a ligand contact to L-glutamine. Cysteine 380 (nucleophile; for glutamine hydrolysis) is an active-site residue. Residues 381 to 384, glutamate 404, and arginine 469 contribute to the L-glutamine site; that span reads FGMQ. Active-site residues include histidine 514 and glutamate 516.

This sequence belongs to the CTP synthase family. Homotetramer.

The catalysed reaction is UTP + L-glutamine + ATP + H2O = CTP + L-glutamate + ADP + phosphate + 2 H(+). It carries out the reaction L-glutamine + H2O = L-glutamate + NH4(+). It catalyses the reaction UTP + NH4(+) + ATP = CTP + ADP + phosphate + 2 H(+). It participates in pyrimidine metabolism; CTP biosynthesis via de novo pathway; CTP from UDP: step 2/2. With respect to regulation, allosterically activated by GTP, when glutamine is the substrate; GTP has no effect on the reaction when ammonia is the substrate. The allosteric effector GTP functions by stabilizing the protein conformation that binds the tetrahedral intermediate(s) formed during glutamine hydrolysis. Inhibited by the product CTP, via allosteric rather than competitive inhibition. Catalyzes the ATP-dependent amination of UTP to CTP with either L-glutamine or ammonia as the source of nitrogen. Regulates intracellular CTP levels through interactions with the four ribonucleotide triphosphates. In Methylorubrum populi (strain ATCC BAA-705 / NCIMB 13946 / BJ001) (Methylobacterium populi), this protein is CTP synthase.